A 31-amino-acid chain; its full sequence is Antifungal protein 1 (31 aa).

Its subcellular location is the secreted. Antifungal activity against C.albicans ATCC 76615. The protein is Antifungal protein 1 of Musca domestica (House fly).